Reading from the N-terminus, the 984-residue chain is Ubiquitin conjugation factor E4 ufd-2 (984 aa).

The region spanning D909–S982 is the U-box domain.

It belongs to the ubiquitin conjugation factor E4 family. In terms of assembly, forms a complex composed of deubiquitinating enzyme atx-3, E4 ubiquitin-protein ligase ufd-2 and cdc-48.1; within the complex interacts with atx-3 and cdc-48.1 (via DDDLYN motif). Forms a complex composed of cdc-48.1, myosin chaperone unc-45, ubiquitin-protein ligases ufd-2 and chn-1; the complex targets myosin chaperone unc-45 for proteasomal degradation; within the complex interacts with cdc-48.1 (via DDDLYN motif), chn-1 and unc-45. Forms a complex composed of unc-45 and myosin heavy chain B unc-54; the complex targets unfolded unc-54 for proteasomal degradation; within the complex interacts with unc-45 (via TPR domain) and unc-54. Interacts with cdc-48.2 (via DDDLYN motif). In terms of tissue distribution, expressed in the germline (at protein level).

Its subcellular location is the cytoplasm. It localises to the nucleus membrane. It is found in the nucleus. The protein localises to the nucleolus. It carries out the reaction S-ubiquitinyl-[E2 ubiquitin-conjugating enzyme]-L-cysteine + [acceptor protein]-L-lysine = [E2 ubiquitin-conjugating enzyme]-L-cysteine + N(6)-ubiquitinyl-[acceptor protein]-L-lysine.. The protein operates within protein modification; protein ubiquitination. Functionally, acts as an E4 ubiquitin ligase mediating the assembly of polyubiquitin chains on substrates ubiquitinated by another E3 ubiquitin ligase. The elongation of preexisting ubiquitin chains preferentially targets ubiquitin 'Lys-29' and 'Lys-48' residues. Also functions as an E3 ligase in conjunction with specific E1 and E2 ligases. Probably by regulating protein ubiquitination at DNA damage repair sites, coordinates DNA double-strand-break repair and apoptosis in the germline. Required for germline apoptosis in response to DNA damage downstream of cep-1. Involved in the resolution of DNA-repair sites by promoting the release of rad-51 from DNA damage foci. In association with protein-ligase chn-1, acts as an E3/E4 ligase to poly-ubiquitinate lysine residues in the UCS domain of myosin chaperone unc-45. By targeting myosin chaperone unc-45 for proteasomal degradation, regulates myosin assembly in body wall muscles in association with cdc-48.1 and chn-1. However, in a contrasting study, acts as an E3 ligase, independently of chn-1, to poly-ubiquitinate unc-45 without promoting unc-45 proteasomal degradation. Instead, uses unc-45 as an adapter protein to recruit and poly-ubiquitinate unfolded myosin heavy chain B unc-54. The polypeptide is Ubiquitin conjugation factor E4 ufd-2 (Caenorhabditis elegans).